We begin with the raw amino-acid sequence, 307 residues long: MEDAGQNPLDDEAEITEIPTLEAIKQNLKYLNSDLEKDLQRLDEANQILLRKIQKKEESIQSLERDIALSIGRVPERDDFNEILAQKETALKDLELESAKLEKKNKTLSKNVMELQKKISKGLKNIASDPETLKKKVTEFKVKLQKSTESCAQQEKEIAKMESDYQSVFQLCEDQAHYIKKYQEILREMEKEKEVMLLEKEISKAQNDSSQVVKPGSTLVETIQSNMEKNIIKKQKRKFWLRHFRYLFFMVMIVIRLLGYVFFHLQYVNPDFLVDTLPMLMSRSSLKWLRDILFPFLTLEVEDVLPH.

A coiled-coil region spans residues 20 to 212; the sequence is TLEAIKQNLK…SKAQNDSSQV (193 aa). The chain crosses the membrane as a helical span at residues 246–268; sequence YLFFMVMIVIRLLGYVFFHLQYV.

It belongs to the TMCO5 family.

The protein resides in the membrane. The polypeptide is Transmembrane and coiled-coil domain-containing protein 5B (Tmco5b) (Mus musculus (Mouse)).